The primary structure comprises 428 residues: 3-phosphoshikimate 1-carboxyvinyltransferase (428 aa).

3-phosphoshikimate is bound by residues Lys-23, Ser-24, and Arg-28. Lys-23 lines the phosphoenolpyruvate pocket. Positions 97 and 125 each coordinate phosphoenolpyruvate. The 3-phosphoshikimate site is built by Ser-170, Ser-171, Gln-172, Ser-198, Asp-314, Asn-337, and Lys-341. Position 172 (Gln-172) interacts with phosphoenolpyruvate. Asp-314 (proton acceptor) is an active-site residue. Phosphoenolpyruvate is bound by residues Arg-345, Arg-387, and Lys-412.

This sequence belongs to the EPSP synthase family. As to quaternary structure, monomer.

The protein resides in the cytoplasm. It catalyses the reaction 3-phosphoshikimate + phosphoenolpyruvate = 5-O-(1-carboxyvinyl)-3-phosphoshikimate + phosphate. It functions in the pathway metabolic intermediate biosynthesis; chorismate biosynthesis; chorismate from D-erythrose 4-phosphate and phosphoenolpyruvate: step 6/7. Its function is as follows. Catalyzes the transfer of the enolpyruvyl moiety of phosphoenolpyruvate (PEP) to the 5-hydroxyl of shikimate-3-phosphate (S3P) to produce enolpyruvyl shikimate-3-phosphate and inorganic phosphate. This is 3-phosphoshikimate 1-carboxyvinyltransferase from Yersinia pseudotuberculosis serotype IB (strain PB1/+).